A 272-amino-acid polypeptide reads, in one-letter code: Enoyl-[acyl-carrier-protein] reductase [NADH] 1 (272 aa).

Residues glycine 17, 23-24 (SI), glutamine 44, 68-69 (DV), and isoleucine 96 each bind NAD(+). Residues tyrosine 149 and tyrosine 159 each act as proton acceptor in the active site. NAD(+) contacts are provided by residues lysine 166 and 195–199 (IKTLA).

This sequence belongs to the short-chain dehydrogenases/reductases (SDR) family. FabI subfamily.

It localises to the cell inner membrane. It carries out the reaction a 2,3-saturated acyl-[ACP] + NAD(+) = a (2E)-enoyl-[ACP] + NADH + H(+). The protein operates within lipid metabolism; fatty acid biosynthesis. This Rhizobium meliloti (strain 1021) (Ensifer meliloti) protein is Enoyl-[acyl-carrier-protein] reductase [NADH] 1 (fabI1).